Reading from the N-terminus, the 417-residue chain is MGDWSFLGRLLENAQEHSTVIGKVWLTVLFIFRILVLGAAAEEVWGDEQSDFTCNTQQPGCENVCYDRAFPISHIRFWALQIIFVSTPTLIYLGHVLHIVRMEEKKKEREEELLRRDNPQHGRGREPMRTGSPRDPPLRDDRGKVRIAGALLRTYVFNIIFKTLFEVGFIAGQYFLYGFQLQPLYRCDRWPCPNTVDCFISRPTEKTIFVIFMLAVACASLVLNMLEIYHLGWKKLKQGVTNHFNPDASEARHKPLDPLPTATSSGPPSVSIGFPPYYTHPACPTVQAKAIGFPGAPLSPADFTVVTLNDAQGRNHPVKHCNGHHLTTEQNWTRQVAEQQTPASKPSSAASSPDGRKGLIDSSGSSLQESALVVTPEEGEQALATTVEMHSPPLVLLDPGRSSKSSNGRARPGDLAI.

An intramembrane segment occupies 2–15; sequence GDWSFLGRLLENAQ. Over 16–19 the chain is Cytoplasmic; it reads EHST. A helical membrane pass occupies residues 20–40; that stretch reads VIGKVWLTVLFIFRILVLGAA. Over 41-71 the chain is Extracellular; sequence AEEVWGDEQSDFTCNTQQPGCENVCYDRAFP. 3 cysteine pairs are disulfide-bonded: C54–C198, C61–C192, and C65–C187. The helical transmembrane segment at 72–92 threads the bilayer; that stretch reads ISHIRFWALQIIFVSTPTLIY. Over 93–158 the chain is Cytoplasmic; it reads LGHVLHIVRM…GALLRTYVFN (66 aa). A compositionally biased stretch (basic and acidic residues) spans 110–128; that stretch reads EEELLRRDNPQHGRGREPM. Residues 110-141 are disordered; sequence EEELLRRDNPQHGRGREPMRTGSPRDPPLRDD. The helical transmembrane segment at 159 to 179 threads the bilayer; it reads IIFKTLFEVGFIAGQYFLYGF. At 180–207 the chain is on the extracellular side; the sequence is QLQPLYRCDRWPCPNTVDCFISRPTEKT. The helical transmembrane segment at 208–228 threads the bilayer; it reads IFVIFMLAVACASLVLNMLEI. At 229 to 417 the chain is on the cytoplasmic side; the sequence is YHLGWKKLKQ…GRARPGDLAI (189 aa). Disordered stretches follow at residues 247-267 and 334-417; these read DASE…SSGP and RQVA…DLAI. Residues 342–353 show a composition bias toward low complexity; it reads PASKPSSAASSP.

This sequence belongs to the connexin family. Alpha-type (group II) subfamily. A hemichannel or connexon is composed of a hexamer of connexins. A functional gap junction is formed by the apposition of two hemichannels. Forms heteromeric channels with GJA8.

The protein localises to the cell membrane. It is found in the cell junction. The protein resides in the gap junction. Structural component of lens fiber gap junctions. Gap junctions are dodecameric channels that connect the cytoplasm of adjoining cells. They are formed by the docking of two hexameric hemichannels, one from each cell membrane. Small molecules and ions diffuse from one cell to a neighboring cell via the central pore. The chain is Gap junction alpha-3 protein (Gja3) from Mus musculus (Mouse).